Here is a 497-residue protein sequence, read N- to C-terminus: Glutamyl-tRNA(Gln) amidotransferase subunit A (497 aa).

Residues Lys-85 and Ser-160 each act as charge relay system in the active site. Residue Ser-184 is the Acyl-ester intermediate of the active site.

Belongs to the amidase family. GatA subfamily. Heterotrimer of A, B and C subunits.

It catalyses the reaction L-glutamyl-tRNA(Gln) + L-glutamine + ATP + H2O = L-glutaminyl-tRNA(Gln) + L-glutamate + ADP + phosphate + H(+). Functionally, allows the formation of correctly charged Gln-tRNA(Gln) through the transamidation of misacylated Glu-tRNA(Gln) in organisms which lack glutaminyl-tRNA synthetase. The reaction takes place in the presence of glutamine and ATP through an activated gamma-phospho-Glu-tRNA(Gln). The protein is Glutamyl-tRNA(Gln) amidotransferase subunit A (gatA) of Mycobacterium leprae (strain TN).